Reading from the N-terminus, the 78-residue chain is Small ribosomal subunit protein bS18 (78 aa).

This sequence belongs to the bacterial ribosomal protein bS18 family. As to quaternary structure, part of the 30S ribosomal subunit. Forms a tight heterodimer with protein bS6.

Its function is as follows. Binds as a heterodimer with protein bS6 to the central domain of the 16S rRNA, where it helps stabilize the platform of the 30S subunit. The polypeptide is Small ribosomal subunit protein bS18 (Acidothermus cellulolyticus (strain ATCC 43068 / DSM 8971 / 11B)).